The sequence spans 645 residues: uncharacterized protein (645 aa).

Positions 1–23 are cleaved as a signal peptide; the sequence is MPSSHRLSATILIFLSLTYISSS. 2 disordered regions span residues 30–58 and 92–129; these read ITDK…TTAS and NSNA…AGIP. Over residues 92-102 the composition is skewed to polar residues; sequence NSNANPYFSTT. A glycan (N-linked (GlcNAc...) asparagine) is linked at Asn107. The segment covering 107–119 has biased composition (basic and acidic residues); the sequence is NRSDSSQKARDPD. The PAN 1 domain occupies 135 to 214; that stretch reads CFRRYENSII…QTRDYFEPTD (80 aa). Cystine bridges form between Cys161–Cys187 and Cys165–Cys175. Residues 225 to 247 form a disordered region; the sequence is ESSSSAPSSEDEDSPPSPPPSAP. 2 PAN domains span residues 281–369 and 378–465; these read CPRG…EKIC and CPST…EVEC. Disulfide bonds link Cys281–Cys369, Cys313–Cys341, Cys317–Cys329, Cys378–Cys465, Cys407–Cys436, and Cys411–Cys422. Residue Asn421 is glycosylated (N-linked (GlcNAc...) asparagine). Basic and acidic residues predominate over residues 556 to 567; that stretch reads AGELENNDHEQI. The tract at residues 556 to 582 is disordered; sequence AGELENNDHEQIEDNNTDASEDPVPTK. The N-linked (GlcNAc...) asparagine glycan is linked to Asn570.

This is an uncharacterized protein from Caenorhabditis elegans.